Reading from the N-terminus, the 41-residue chain is Photosystem II reaction center protein Y (41 aa).

A helical membrane pass occupies residues 7 to 25 (VAIVLAPIAVAAGWAAFNI).

Belongs to the PsbY family. In terms of assembly, PSII is composed of 1 copy each of membrane proteins PsbA, PsbB, PsbC, PsbD, PsbE, PsbF, PsbH, PsbI, PsbJ, PsbK, PsbL, PsbM, PsbT, PsbX, PsbY, PsbZ, Psb30/Ycf12, peripheral proteins PsbO, CyanoQ (PsbQ), PsbU, PsbV and a large number of cofactors. It forms dimeric complexes.

The protein localises to the cellular thylakoid membrane. Its function is as follows. Loosely associated component of the core of photosystem II (PSII), it is not always seen in crystals. PSII is a light-driven water plastoquinone oxidoreductase, using light energy to abstract electrons from H(2)O, generating a proton gradient subsequently used for ATP formation. This Nostoc sp. (strain PCC 7120 / SAG 25.82 / UTEX 2576) protein is Photosystem II reaction center protein Y.